Reading from the N-terminus, the 314-residue chain is Olfactory receptor 51I1 (314 aa).

The Extracellular portion of the chain corresponds to 1-27; the sequence is MLGLNGTPFQPATLQLTGIPGIQTGLT. Residues 28-48 form a helical membrane-spanning segment; that stretch reads WVALIFCILYMISIVGNLSIL. Residues 49–56 are Cytoplasmic-facing; sequence TLVFWEPA. A helical transmembrane segment spans residues 57–77; that stretch reads LHQPMYYFLSMLALNDLGVSF. The Extracellular segment spans residues 78–101; it reads STLPTVISTFCFNYNHVAFNACLV. Cysteines 99 and 191 form a disulfide. The helical transmembrane segment at 102 to 122 threads the bilayer; the sequence is QMFFIHTFSFMESGILLAMSL. The Cytoplasmic portion of the chain corresponds to 123 to 141; that stretch reads DRFVAICYPLRYVTVLTHN. A helical membrane pass occupies residues 142–162; the sequence is RILAMGLGILTKSFTTLFPFP. At 163–198 the chain is on the extracellular side; the sequence is FVVKRLPFCKGNVLHHSYCLHPDLMKVACGDIHVNN. The helical transmembrane segment at 199–219 threads the bilayer; the sequence is IYGLLVIIFTYGMDSTFILLS. The Cytoplasmic segment spans residues 220 to 239; that stretch reads YALILRAMLVIISQEQRLKA. A helical membrane pass occupies residues 240–260; it reads LNTCMSHICAVLAFYVPIIAV. Topologically, residues 261 to 275 are extracellular; the sequence is SMIHRFWKSAPPVVH. Residues 276 to 296 traverse the membrane as a helical segment; sequence VMMSNVYLFVPPMLNPIIYSV. Residues 297–314 are Cytoplasmic-facing; sequence KTKEIRKGILKFFHKSQA.

It belongs to the G-protein coupled receptor 1 family.

It is found in the cell membrane. Functionally, odorant receptor. The protein is Olfactory receptor 51I1 (OR51I1) of Homo sapiens (Human).